The sequence spans 434 residues: Putative magnesium transporter MRS2-D (434 aa).

Disordered regions lie at residues 126-171 (AASP…DGEA) and 279-311 (EASELEDHSSRDEEGVEGGGGGDGDDETIAGGG). The segment covering 279 to 291 (EASELEDHSSRDE) has biased composition (basic and acidic residues). 2 helical membrane passes run 367-387 (GILLSTGTLVSSCAIAVTGVF) and 405-425 (FPCAAAGIVAGSLALYLAALL).

The protein belongs to the CorA metal ion transporter (MIT) (TC 1.A.35.5) family.

It is found in the membrane. Functionally, putative magnesium transporter. This chain is Putative magnesium transporter MRS2-D (MRS2-D), found in Oryza sativa subsp. japonica (Rice).